Consider the following 462-residue polypeptide: Kremen protein 2 (462 aa).

The signal sequence occupies residues 1–25; it reads MGTQALQGFLFLLFLPLLQPRGASA. Residues 26 to 364 lie on the Extracellular side of the membrane; it reads GSLHSPGLSE…SPRPGAPPAA (339 aa). The Kringle domain maps to 35-119; the sequence is ECFQVNGADY…YWRYCDIPSC (85 aa). Disulfide bonds link cysteine 36/cysteine 119, cysteine 60/cysteine 100, and cysteine 89/cysteine 114. An N-linked (GlcNAc...) asparagine glycan is attached at asparagine 49. The 95-residue stretch at 121-215 folds into the WSC domain; sequence MPGYLGCFVD…DGRLGVYEVS (95 aa). Cysteine 219 and cysteine 245 are disulfide-bonded. Residues 219–326 form the CUB domain; that stretch reads CQGNWTAPQG…QGFALTYRGL (108 aa). N-linked (GlcNAc...) asparagine glycans are attached at residues asparagine 222, asparagine 244, and asparagine 351. The segment at 328-352 is disordered; it reads DAAEDPEAPEGSAQTPAAPLDGANV. Residues 365-387 form a helical membrane-spanning segment; the sequence is IGARVFSTVTAVSVLLLLLLGLL. The Cytoplasmic portion of the chain corresponds to 388-462; that stretch reads RPLRRRSCLL…SSLRSLISAL (75 aa).

As to quaternary structure, interacts with ERLEC1. Forms a ternary complex with DKK1 and LRP6.

The protein resides in the membrane. In terms of biological role, receptor for Dickkopf proteins. Cooperates with DKK1/2 to inhibit Wnt/beta-catenin signaling by promoting the endocytosis of Wnt receptors LRP5 and LRP6. Plays a role in limb development; attenuates Wnt signaling in the developing limb to allow normal limb patterning and can also negatively regulate bone formation. This is Kremen protein 2 (KREMEN2) from Homo sapiens (Human).